Here is a 455-residue protein sequence, read N- to C-terminus: Keratin, type I cuticular Ha5 (455 aa).

Residues 1–97 (MASKCLKASF…FGEGILTGNE (97 aa)) form a head region. Positions 97 to 408 (EKETMQSLND…GLLESEDSKL (312 aa)) constitute an IF rod domain. A coil 1A region spans residues 98–132 (KETMQSLNDRLASYLEKVRQLEQENASLESRIREW). Residues 133–143 (CEQQVPYMCPD) are linker 1. A coil 1B region spans residues 144 to 244 (YQSYFRTMEE…HEEEVNSLRC (101 aa)). Residues 245 to 260 (QLGDRLNVEVDAAPPV) form a linker 12 region. The segment at 261–404 (DLNRVLDEMR…NTYRGLLESE (144 aa)) is coil 2. A tail region spans residues 405–455 (DSKLPCNPCAPDYSSSKSCLPCLPAVSCSTGAARTTCSPRPVCVPCPGGRF).

The protein belongs to the intermediate filament family.

The chain is Keratin, type I cuticular Ha5 from Mus musculus (Mouse).